Reading from the N-terminus, the 79-residue chain is MKTLLLTLVMVTIMCLDLGYTLTCYKGYHDTVVCKPHETICYEYFIPATHGNAILARGCGTSCPGGIRPVCCRTDLCNK.

An N-terminal signal peptide occupies residues 1–21 (MKTLLLTLVMVTIMCLDLGYT). 4 disulfide bridges follow: Cys-24/Cys-41, Cys-34/Cys-59, Cys-63/Cys-71, and Cys-72/Cys-77.

This sequence belongs to the three-finger toxin family. Short-chain subfamily. Type III alpha-neurotoxin sub-subfamily. In terms of tissue distribution, expressed by the venom gland.

It localises to the secreted. In terms of biological role, binds with high affinity to muscle nicotinic acetylcholine receptor (nAChR) and inhibit acetylcholine from binding to the receptor, thereby impairing neuromuscular transmission. Compete with the binding of alpha-bungarotoxin on muscle AChR (from Torpedo) with an IC(50) of 0.31 uM (SNTX1) and 3.1 uM (SNTX5). Is able of exerting muscle paralysis, spasms and increased respiration. In Pseudonaja textilis (Eastern brown snake), this protein is Short neurotoxin 1/5.